Here is a 109-residue protein sequence, read N- to C-terminus: Iron-sulfur cluster assembly protein CyaY (109 aa).

Belongs to the frataxin family.

Involved in iron-sulfur (Fe-S) cluster assembly. May act as a regulator of Fe-S biogenesis. This Acidovorax ebreus (strain TPSY) (Diaphorobacter sp. (strain TPSY)) protein is Iron-sulfur cluster assembly protein CyaY.